A 131-amino-acid polypeptide reads, in one-letter code: Phosphoribosyl-AMP cyclohydrolase (131 aa).

Mg(2+) is bound at residue D89. C90 is a binding site for Zn(2+). D91 and D93 together coordinate Mg(2+). Residues C106 and C113 each contribute to the Zn(2+) site.

This sequence belongs to the PRA-CH family. In terms of assembly, homodimer. Mg(2+) is required as a cofactor. The cofactor is Zn(2+).

Its subcellular location is the cytoplasm. The enzyme catalyses 1-(5-phospho-beta-D-ribosyl)-5'-AMP + H2O = 1-(5-phospho-beta-D-ribosyl)-5-[(5-phospho-beta-D-ribosylamino)methylideneamino]imidazole-4-carboxamide. The protein operates within amino-acid biosynthesis; L-histidine biosynthesis; L-histidine from 5-phospho-alpha-D-ribose 1-diphosphate: step 3/9. Catalyzes the hydrolysis of the adenine ring of phosphoribosyl-AMP. In Bifidobacterium longum (strain DJO10A), this protein is Phosphoribosyl-AMP cyclohydrolase.